Reading from the N-terminus, the 413-residue chain is Terephthalate 1,2-dioxygenase, terminal oxygenase component subunit alpha 2 (413 aa).

The Rieske domain maps to 41–144 (NYLCLESEIP…CKEEHGPRKL (104 aa)). C82, H84, C102, and H105 together coordinate [2Fe-2S] cluster.

It belongs to the bacterial ring-hydroxylating dioxygenase alpha subunit family. In terms of assembly, heterotetramer composed of 2 alpha (TphA2I and TphA2II) and 2 beta (TphA3I and TphA3II) subunits. Part of a multicomponent enzyme system composed of a reductase (TphA1I or TphA1II) and a two-subunit oxygenase component (TphA2I or TphA2II and TphA3I or TphA3II). Fe cation serves as cofactor. The cofactor is [2Fe-2S] cluster.

It carries out the reaction terephthalate + NADH + O2 + H(+) = (3S,4R)-3,4-dihydroxycyclohexa-1,5-diene-1,4-dicarboxylate + NAD(+). Its activity is regulated as follows. Inhibited by EDTA. Functionally, component of the terephthalate 1,2-dioxygenase multicomponent enzyme system which catalyzes the dioxygenation of terephthalate (TER/TPA) to 1,2-dihydroxy-3,5-cyclohexadiene-1,4-dicarboxylic acid (DCD). It can also use 2,5-dicarboxypyridine (PDC) and 1,4-napthalenedicarboxylic acid (NDC) as substrates, and preferentially uses NADPH which is the physiological electron donor. The chain is Terephthalate 1,2-dioxygenase, terminal oxygenase component subunit alpha 2 (tphA2II) from Comamonas sp.